The chain runs to 906 residues: Protein translocase subunit SecA (906 aa).

ATP-binding positions include Gln-86, 104–108, and Asp-511; that span reads GEGKT. Positions 852-888 are enriched in basic and acidic residues; sequence EHESVIDNNQRHDEDEQEEAPKVKQVRREGPKVKRND. Positions 852-906 are disordered; sequence EHESVIDNNQRHDEDEQEEAPKVKQVRREGPKVKRNDPCPCGSGKKYKQCHSKVE. The Zn(2+) site is built by Cys-890, Cys-892, Cys-901, and His-902. The span at 896-906 shows a compositional bias: basic residues; sequence KKYKQCHSKVE.

This sequence belongs to the SecA family. Monomer and homodimer. Part of the essential Sec protein translocation apparatus which comprises SecA, SecYEG and auxiliary proteins SecDF-YajC and YidC. Zn(2+) is required as a cofactor.

It localises to the cell inner membrane. Its subcellular location is the cytoplasm. The enzyme catalyses ATP + H2O + cellular proteinSide 1 = ADP + phosphate + cellular proteinSide 2.. Part of the Sec protein translocase complex. Interacts with the SecYEG preprotein conducting channel. Has a central role in coupling the hydrolysis of ATP to the transfer of proteins into and across the cell membrane, serving both as a receptor for the preprotein-SecB complex and as an ATP-driven molecular motor driving the stepwise translocation of polypeptide chains across the membrane. The chain is Protein translocase subunit SecA from Francisella tularensis subsp. tularensis (strain SCHU S4 / Schu 4).